An 87-amino-acid chain; its full sequence is Keratin-associated protein 7-1 (87 aa).

Residues 43 to 84 form an 11 X 2 AA repeats of G-[YCGS] region; the sequence is GCGCNGYSSLGYSFGGSNINNLGGCYGGSFYRPWGSGSGFGY.

The protein belongs to the KRTAP type 7 family. Interacts with hair keratins. In terms of tissue distribution, expressed in the upper portion of the hair cortex.

Its function is as follows. In the hair cortex, hair keratin intermediate filaments are embedded in an interfilamentous matrix, consisting of hair keratin-associated proteins (KRTAP), which are essential for the formation of a rigid and resistant hair shaft through their extensive disulfide bond cross-linking with abundant cysteine residues of hair keratins. The matrix proteins include the high-sulfur and high-glycine-tyrosine keratins. The sequence is that of Keratin-associated protein 7-1 (KRTAP7-1) from Homo sapiens (Human).